The chain runs to 93 residues: Protein IDA-LIKE 4 (93 aa).

Residues 1-35 (MYPTRPHYWRRRLSINRPQAFLLLILCLFFIHHCD) form the signal peptide.

In terms of tissue distribution, expressed in mainly in buds. Lower levels in roots. Detected at the base of pedicel, in the floral and funicule abscission zones, in vascular tissues, in guard cells of young seedlings and in hydathodes.

The protein resides in the secreted. It localises to the extracellular space. May be involved in floral abscission. The polypeptide is Protein IDA-LIKE 4 (IDL4) (Arabidopsis thaliana (Mouse-ear cress)).